The sequence spans 403 residues: 4-hydroxy-3-methylbut-2-enyl diphosphate reductase (403 aa).

Residue C66 participates in [4Fe-4S] cluster binding. H96 serves as a coordination point for (2E)-4-hydroxy-3-methylbut-2-enyl diphosphate. H96 is a dimethylallyl diphosphate binding site. H96 provides a ligand contact to isopentenyl diphosphate. C157 is a [4Fe-4S] cluster binding site. H185 contributes to the (2E)-4-hydroxy-3-methylbut-2-enyl diphosphate binding site. Residue H185 participates in dimethylallyl diphosphate binding. Residue H185 coordinates isopentenyl diphosphate. E187 serves as the catalytic Proton donor. A (2E)-4-hydroxy-3-methylbut-2-enyl diphosphate-binding site is contributed by T250. Residue C288 participates in [4Fe-4S] cluster binding. The (2E)-4-hydroxy-3-methylbut-2-enyl diphosphate site is built by S317, S318, N319, and S379. The dimethylallyl diphosphate site is built by S317, S318, N319, and S379. 4 residues coordinate isopentenyl diphosphate: S317, S318, N319, and S379.

This sequence belongs to the IspH family. [4Fe-4S] cluster serves as cofactor.

It carries out the reaction isopentenyl diphosphate + 2 oxidized [2Fe-2S]-[ferredoxin] + H2O = (2E)-4-hydroxy-3-methylbut-2-enyl diphosphate + 2 reduced [2Fe-2S]-[ferredoxin] + 2 H(+). It catalyses the reaction dimethylallyl diphosphate + 2 oxidized [2Fe-2S]-[ferredoxin] + H2O = (2E)-4-hydroxy-3-methylbut-2-enyl diphosphate + 2 reduced [2Fe-2S]-[ferredoxin] + 2 H(+). It functions in the pathway isoprenoid biosynthesis; dimethylallyl diphosphate biosynthesis; dimethylallyl diphosphate from (2E)-4-hydroxy-3-methylbutenyl diphosphate: step 1/1. Its pathway is isoprenoid biosynthesis; isopentenyl diphosphate biosynthesis via DXP pathway; isopentenyl diphosphate from 1-deoxy-D-xylulose 5-phosphate: step 6/6. Catalyzes the conversion of 1-hydroxy-2-methyl-2-(E)-butenyl 4-diphosphate (HMBPP) into a mixture of isopentenyl diphosphate (IPP) and dimethylallyl diphosphate (DMAPP). Acts in the terminal step of the DOXP/MEP pathway for isoprenoid precursor biosynthesis. This is 4-hydroxy-3-methylbut-2-enyl diphosphate reductase from Picosynechococcus sp. (strain ATCC 27264 / PCC 7002 / PR-6) (Agmenellum quadruplicatum).